A 93-amino-acid chain; its full sequence is Small ribosomal subunit protein bS16 (93 aa).

This sequence belongs to the bacterial ribosomal protein bS16 family.

In Opitutus terrae (strain DSM 11246 / JCM 15787 / PB90-1), this protein is Small ribosomal subunit protein bS16.